We begin with the raw amino-acid sequence, 378 residues long: UDP-N-acetylglucosamine--N-acetylmuramyl-(pentapeptide) pyrophosphoryl-undecaprenol N-acetylglucosamine transferase (378 aa).

UDP-N-acetyl-alpha-D-glucosamine contacts are provided by residues 14–16 (TGG), Asn-125, Arg-165, Ser-193, and Gln-293.

This sequence belongs to the glycosyltransferase 28 family. MurG subfamily.

It localises to the cell inner membrane. It carries out the reaction di-trans,octa-cis-undecaprenyl diphospho-N-acetyl-alpha-D-muramoyl-L-alanyl-D-glutamyl-meso-2,6-diaminopimeloyl-D-alanyl-D-alanine + UDP-N-acetyl-alpha-D-glucosamine = di-trans,octa-cis-undecaprenyl diphospho-[N-acetyl-alpha-D-glucosaminyl-(1-&gt;4)]-N-acetyl-alpha-D-muramoyl-L-alanyl-D-glutamyl-meso-2,6-diaminopimeloyl-D-alanyl-D-alanine + UDP + H(+). The protein operates within cell wall biogenesis; peptidoglycan biosynthesis. Functionally, cell wall formation. Catalyzes the transfer of a GlcNAc subunit on undecaprenyl-pyrophosphoryl-MurNAc-pentapeptide (lipid intermediate I) to form undecaprenyl-pyrophosphoryl-MurNAc-(pentapeptide)GlcNAc (lipid intermediate II). This chain is UDP-N-acetylglucosamine--N-acetylmuramyl-(pentapeptide) pyrophosphoryl-undecaprenol N-acetylglucosamine transferase, found in Bartonella henselae (strain ATCC 49882 / DSM 28221 / CCUG 30454 / Houston 1) (Rochalimaea henselae).